The sequence spans 368 residues: uncharacterized protein (368 aa).

The protein belongs to the CdaR family.

This is an uncharacterized protein from Haemophilus influenzae (strain ATCC 51907 / DSM 11121 / KW20 / Rd).